Reading from the N-terminus, the 152-residue chain is Endoribonuclease YbeY (152 aa).

Zn(2+) contacts are provided by H113, H117, and H123.

It belongs to the endoribonuclease YbeY family. Zn(2+) is required as a cofactor.

It localises to the cytoplasm. In terms of biological role, single strand-specific metallo-endoribonuclease involved in late-stage 70S ribosome quality control and in maturation of the 3' terminus of the 16S rRNA. In Janthinobacterium sp. (strain Marseille) (Minibacterium massiliensis), this protein is Endoribonuclease YbeY.